The following is a 210-amino-acid chain: Outer-membrane lipoprotein LolB (210 aa).

Positions 1-26 (MSKLKIDTKRRFSLLIALVLIISLSS) are cleaved as a signal peptide. A lipid anchor (N-palmitoyl cysteine) is attached at Cys27. The S-diacylglycerol cysteine moiety is linked to residue Cys27.

Belongs to the LolB family. Monomer.

The protein localises to the cell outer membrane. Its function is as follows. Plays a critical role in the incorporation of lipoproteins in the outer membrane after they are released by the LolA protein. The sequence is that of Outer-membrane lipoprotein LolB from Francisella tularensis subsp. novicida (strain U112).